Reading from the N-terminus, the 158-residue chain is MDFRIGQGYDVHQLVPGRPLIIGGVTIPYERGLLGHSDADVLLHAITDALFGAAALGDIGRHFSDTDAAFKGADSRVLLRECAARVKAAGFTIQNVDSTVIAQAPKLAPHIDGMRANIAADLGLPLERVNVKAKTNEKLGYLGRGDGIEAQAAALLVK.

The a divalent metal cation site is built by Asp10 and His12. 4-CDP-2-C-methyl-D-erythritol 2-phosphate-binding positions include 10–12 (DVH) and 36–37 (HS). His44 contributes to the a divalent metal cation binding site. 4-CDP-2-C-methyl-D-erythritol 2-phosphate contacts are provided by residues 58-60 (DIG), 63-67 (FSDTD), and Arg144.

This sequence belongs to the IspF family. As to quaternary structure, homotrimer. It depends on a divalent metal cation as a cofactor.

It catalyses the reaction 4-CDP-2-C-methyl-D-erythritol 2-phosphate = 2-C-methyl-D-erythritol 2,4-cyclic diphosphate + CMP. Its pathway is isoprenoid biosynthesis; isopentenyl diphosphate biosynthesis via DXP pathway; isopentenyl diphosphate from 1-deoxy-D-xylulose 5-phosphate: step 4/6. Its function is as follows. Involved in the biosynthesis of isopentenyl diphosphate (IPP) and dimethylallyl diphosphate (DMAPP), two major building blocks of isoprenoid compounds. Catalyzes the conversion of 4-diphosphocytidyl-2-C-methyl-D-erythritol 2-phosphate (CDP-ME2P) to 2-C-methyl-D-erythritol 2,4-cyclodiphosphate (ME-CPP) with a corresponding release of cytidine 5-monophosphate (CMP). This is 2-C-methyl-D-erythritol 2,4-cyclodiphosphate synthase from Burkholderia vietnamiensis (strain G4 / LMG 22486) (Burkholderia cepacia (strain R1808)).